Consider the following 722-residue polypeptide: MSQEKASSPSGKMDGEKPVDASEEKRKEGGKKKSKDGGGDGGRAELNPWPEYINTRLDMYNKLKAEHDSILAEKAAKDSKPIKVTLPDGKQVDAESWKTTPYQIACGISQGLADNTVVAKVNKVVWDLDRPLETDCTLELLKFEDEEAQAVYWHSSAHIMGEAMERVYGGCLCYGPPIENGFYYDMYLEEGGVSSNDFSSLETLCKKIIKEKQTFERLEVKKETLLEMFKYNKFKCRILNEKVNTPTTTVYRCGPLIDLCRGPHVRHTGKIKTLKIHKNSSTYWEGKADMETLQRIYGISFPDPKLLKEWEKFQEEAKNRDHRKIGRDQELYFFHELSPGSCFFLPKGAYIYNTLMEFIRSEYRKRGFQEVVTPNIFNSRLWMTSGHWQHYSENMFSFEVEKEQFALKPMNCPGHCLMFDHRPRSWRELPLRLADFGVLHRNELSGALTGLTRVRRFQQDDAHIFCAMEQIEDEIKGCLDFLRTVYSVFGFSFKLNLSTRPEKFLGDIEIWNQAEKQLENSLNEFGEKWELNPGDGAFYGPKIDIQIKDAIGRYHQCATIQLDFQLPIRFNLTYVSHDGDDKKRPVIVHRAILGSVERMIAILTENYGGKWPFWLSPRQVMVVPVGPTCDEYAQKVRQQFHDAKFMADTDLDPGCTLNKKIRNAQLAQYNFILVVGEKEKASGTVNIRTRDNKVHGERTVEETVRRLQQLKQTRSKQAEEEF.

Over residues 1-10 (MSQEKASSPS) the composition is skewed to polar residues. A disordered region spans residues 1 to 48 (MSQEKASSPSGKMDGEKPVDASEEKRKEGGKKKSKDGGGDGGRAELNP). Residues 13 to 27 (MDGEKPVDASEEKRK) are compositionally biased toward basic and acidic residues. The TGS domain maps to 78 to 142 (DSKPIKVTLP…ETDCTLELLK (65 aa)). Position 242 is an N6-acetyllysine (Lys242). Thr245 is modified (phosphothreonine). The residue at position 297 (Tyr297) is a Phosphotyrosine. Residue Thr452 is modified to Phosphothreonine.

It belongs to the class-II aminoacyl-tRNA synthetase family. As to quaternary structure, homodimer. ISGylated.

Its subcellular location is the cytoplasm. It catalyses the reaction tRNA(Thr) + L-threonine + ATP = L-threonyl-tRNA(Thr) + AMP + diphosphate + H(+). In terms of biological role, catalyzes the attachment of threonine to tRNA(Thr) in a two-step reaction: threonine is first activated by ATP to form Thr-AMP and then transferred to the acceptor end of tRNA(Thr). Also edits incorrectly charged tRNA(Thr) via its editing domain, at the post-transfer stage. The polypeptide is Threonine--tRNA ligase 1, cytoplasmic (Tars1) (Mus musculus (Mouse)).